Consider the following 148-residue polypeptide: SsrA-binding protein (148 aa).

A disordered region spans residues Glu-128–Arg-148.

This sequence belongs to the SmpB family.

It is found in the cytoplasm. Functionally, required for rescue of stalled ribosomes mediated by trans-translation. Binds to transfer-messenger RNA (tmRNA), required for stable association of tmRNA with ribosomes. tmRNA and SmpB together mimic tRNA shape, replacing the anticodon stem-loop with SmpB. tmRNA is encoded by the ssrA gene; the 2 termini fold to resemble tRNA(Ala) and it encodes a 'tag peptide', a short internal open reading frame. During trans-translation Ala-aminoacylated tmRNA acts like a tRNA, entering the A-site of stalled ribosomes, displacing the stalled mRNA. The ribosome then switches to translate the ORF on the tmRNA; the nascent peptide is terminated with the 'tag peptide' encoded by the tmRNA and targeted for degradation. The ribosome is freed to recommence translation, which seems to be the essential function of trans-translation. This chain is SsrA-binding protein, found in Fusobacterium nucleatum subsp. nucleatum (strain ATCC 25586 / DSM 15643 / BCRC 10681 / CIP 101130 / JCM 8532 / KCTC 2640 / LMG 13131 / VPI 4355).